The sequence spans 282 residues: Pantothenate synthetase (282 aa).

30 to 37 (MGNLHDGH) is an ATP binding site. Histidine 37 functions as the Proton donor in the catalytic mechanism. Glutamine 61 is a binding site for (R)-pantoate. Glutamine 61 is a binding site for beta-alanine. Residue 149-152 (GEKD) participates in ATP binding. Glutamine 155 provides a ligand contact to (R)-pantoate. Position 186–189 (186–189 (MSSR)) interacts with ATP.

The protein belongs to the pantothenate synthetase family. In terms of assembly, homodimer.

It localises to the cytoplasm. The enzyme catalyses (R)-pantoate + beta-alanine + ATP = (R)-pantothenate + AMP + diphosphate + H(+). It functions in the pathway cofactor biosynthesis; (R)-pantothenate biosynthesis; (R)-pantothenate from (R)-pantoate and beta-alanine: step 1/1. In terms of biological role, catalyzes the condensation of pantoate with beta-alanine in an ATP-dependent reaction via a pantoyl-adenylate intermediate. The chain is Pantothenate synthetase from Alteromonas mediterranea (strain DSM 17117 / CIP 110805 / LMG 28347 / Deep ecotype).